We begin with the raw amino-acid sequence, 336 residues long: Glyceraldehyde-3-phosphate dehydrogenase (336 aa).

Residues 12–13 (RI), D34, R78, and T121 each bind NAD(+). Residues 151–153 (SCT), T182, R199, 212–213 (TG), and R235 each bind D-glyceraldehyde 3-phosphate. C152 acts as the Nucleophile in catalysis. N316 contributes to the NAD(+) binding site.

Belongs to the glyceraldehyde-3-phosphate dehydrogenase family. In terms of assembly, homotetramer.

It localises to the cytoplasm. The catalysed reaction is D-glyceraldehyde 3-phosphate + phosphate + NAD(+) = (2R)-3-phospho-glyceroyl phosphate + NADH + H(+). Its pathway is carbohydrate degradation; glycolysis; pyruvate from D-glyceraldehyde 3-phosphate: step 1/5. Functionally, catalyzes the oxidative phosphorylation of glyceraldehyde 3-phosphate (G3P) to 1,3-bisphosphoglycerate (BPG) using the cofactor NAD. The first reaction step involves the formation of a hemiacetal intermediate between G3P and a cysteine residue, and this hemiacetal intermediate is then oxidized to a thioester, with concomitant reduction of NAD to NADH. The reduced NADH is then exchanged with the second NAD, and the thioester is attacked by a nucleophilic inorganic phosphate to produce BPG. This chain is Glyceraldehyde-3-phosphate dehydrogenase (gap), found in Streptococcus pyogenes serotype M3 (strain ATCC BAA-595 / MGAS315).